The chain runs to 100 residues: Large ribosomal subunit protein uL23 (100 aa).

The protein belongs to the universal ribosomal protein uL23 family. Part of the 50S ribosomal subunit. Contacts protein L29, and trigger factor when it is bound to the ribosome.

Functionally, one of the early assembly proteins it binds 23S rRNA. One of the proteins that surrounds the polypeptide exit tunnel on the outside of the ribosome. Forms the main docking site for trigger factor binding to the ribosome. This is Large ribosomal subunit protein uL23 from Buchnera aphidicola subsp. Acyrthosiphon pisum (strain 5A).